We begin with the raw amino-acid sequence, 749 residues long: uncharacterized protein (749 aa).

Disordered regions lie at residues 1 to 58 (MGTV…QPSN), 124 to 170 (DANA…PSPL), 200 to 291 (SRFS…PPVS), and 385 to 405 (YTWS…NPST). Residues 13-24 (LNNGLSSNNGSS) show a composition bias toward low complexity. 4 stretches are compositionally biased toward polar residues: residues 149 to 159 (KSASKDSNAFN), 238 to 252 (ESKT…PSLN), 265 to 275 (LNYQNSSLNPS), and 388 to 405 (SRHS…NPST). The PSP1 C-terminal domain maps to 644 to 729 (KRILRKAQPH…YKTRIWMCAV (86 aa)).

This is an uncharacterized protein from Schizosaccharomyces pombe (strain 972 / ATCC 24843) (Fission yeast).